A 401-amino-acid chain; its full sequence is uncharacterized protein (401 aa).

Transmembrane regions (helical) follow at residues 44–64, 69–89, 99–119, 130–150, 201–221, 246–266, and 286–306; these read LKYT…LVFI, LYSF…FVLL, LVFN…LIIF, ILST…SIIP, FIYA…LYIL, ILFY…SFVA, and LFFS…GTVV.

The protein resides in the cell membrane. This is an uncharacterized protein from Mycoplasma pneumoniae (strain ATCC 29342 / M129 / Subtype 1) (Mycoplasmoides pneumoniae).